A 351-amino-acid polypeptide reads, in one-letter code: MSLQINTPDWILHANAPLRDLNTFHIQAQARWLLEIIHPTALPQALTHPHIVGLPILVLGSGSNVLLAANPEECVLRFVNREVTILEHRINHALVRAGAGMAWHDLVLWSLQQGLSGLENLALIPGTVGACSIQNIGAYGVQVEEFVHIVEAYDQTEGQFVRLTASECEFAYRNSRFKREPNRYLIAAVEFRLPLLHELKLNYAGISEELEALQITLPEPRDVAQAVINLRRRKLPDPEVLSNAGSFFKNPYLPREQAEQLRQHHPTLPIYPGETPESNKLSAAWLIEQCGWKGIREGDAGVAPQHALVLVNYGEATGAELLALARRIAASVQERFGVAIEPETRLIGAQW.

In terms of domain architecture, FAD-binding PCMH-type spans His25 to Leu196. Residue Arg173 is part of the active site. Ser246 acts as the Proton donor in catalysis. The active site involves Glu343.

It belongs to the MurB family. FAD serves as cofactor.

Its subcellular location is the cytoplasm. It carries out the reaction UDP-N-acetyl-alpha-D-muramate + NADP(+) = UDP-N-acetyl-3-O-(1-carboxyvinyl)-alpha-D-glucosamine + NADPH + H(+). The protein operates within cell wall biogenesis; peptidoglycan biosynthesis. Its function is as follows. Cell wall formation. The protein is UDP-N-acetylenolpyruvoylglucosamine reductase of Xylella fastidiosa (strain 9a5c).